The following is a 113-amino-acid chain: Nucleoid-associated protein Synpcc7942_0464 (113 aa).

This sequence belongs to the YbaB/EbfC family. In terms of assembly, homodimer.

It is found in the cytoplasm. The protein localises to the nucleoid. Binds to DNA and alters its conformation. May be involved in regulation of gene expression, nucleoid organization and DNA protection. This chain is Nucleoid-associated protein Synpcc7942_0464, found in Synechococcus elongatus (strain ATCC 33912 / PCC 7942 / FACHB-805) (Anacystis nidulans R2).